The chain runs to 121 residues: uncharacterized protein (121 aa).

Its subcellular location is the mitochondrion. This is an uncharacterized protein from Arabidopsis thaliana (Mouse-ear cress).